A 500-amino-acid polypeptide reads, in one-letter code: NAD(P)H-quinone oxidoreductase subunit 2, chloroplastic (500 aa).

The next 13 membrane-spanning stretches (helical) occupy residues 15–35 (ILPE…DLSL), 42–62 (WIIY…CLQW), 79–99 (FSIA…LLSI), 109–129 (LMEF…LCGA), 132–152 (LITI…LAGY), 167–187 (LLVG…LYGL), 201–221 (LIFA…CIIV), 247–267 (VVAF…IRII), 278–298 (WQFL…LVAI), 306–326 (MLAY…ISST), 334–354 (LVYM…VILF), 377–397 (ASCL…AGFF), and 400–420 (IYLF…VGLL).

Belongs to the complex I subunit 2 family. In terms of assembly, NDH is composed of at least 16 different subunits, 5 of which are encoded in the nucleus.

It is found in the plastid. It localises to the chloroplast thylakoid membrane. It carries out the reaction a plastoquinone + NADH + (n+1) H(+)(in) = a plastoquinol + NAD(+) + n H(+)(out). The catalysed reaction is a plastoquinone + NADPH + (n+1) H(+)(in) = a plastoquinol + NADP(+) + n H(+)(out). Its function is as follows. NDH shuttles electrons from NAD(P)H:plastoquinone, via FMN and iron-sulfur (Fe-S) centers, to quinones in the photosynthetic chain and possibly in a chloroplast respiratory chain. The immediate electron acceptor for the enzyme in this species is believed to be plastoquinone. Couples the redox reaction to proton translocation, and thus conserves the redox energy in a proton gradient. This is NAD(P)H-quinone oxidoreductase subunit 2, chloroplastic from Chaetosphaeridium globosum (Charophycean green alga).